The chain runs to 307 residues: Homoserine O-acetyltransferase (307 aa).

The active-site Acyl-thioester intermediate is the cysteine 142. Lysine 163 and serine 192 together coordinate substrate. The active-site Proton acceptor is histidine 235. Glutamate 237 is an active-site residue. Arginine 249 serves as a coordination point for substrate.

The protein belongs to the MetA family.

It is found in the cytoplasm. It catalyses the reaction L-homoserine + acetyl-CoA = O-acetyl-L-homoserine + CoA. The protein operates within amino-acid biosynthesis; L-methionine biosynthesis via de novo pathway; O-acetyl-L-homoserine from L-homoserine: step 1/1. Transfers an acetyl group from acetyl-CoA to L-homoserine, forming acetyl-L-homoserine. This chain is Homoserine O-acetyltransferase, found in Sinorhizobium fredii (strain NBRC 101917 / NGR234).